The sequence spans 312 residues: Malate dehydrogenase (312 aa).

NAD(+)-binding positions include 12–17 (GAGFTG) and D36. R87 and R93 together coordinate substrate. NAD(+) is bound by residues N100 and 123 to 125 (LTN). N125 lines the substrate pocket. At S149 the chain carries Phosphoserine. A substrate-binding site is contributed by R156. The active-site Proton acceptor is H180.

This sequence belongs to the LDH/MDH superfamily. MDH type 3 family.

It catalyses the reaction (S)-malate + NAD(+) = oxaloacetate + NADH + H(+). Catalyzes the reversible oxidation of malate to oxaloacetate. The polypeptide is Malate dehydrogenase (mdh) (Bacillus subtilis (strain 168)).